A 57-amino-acid chain; its full sequence is uncharacterized protein (57 aa).

A signal peptide spans 1 to 22; it reads MNEIIITIIVLILLLFITLSRN. Residues 26-57 are a coiled coil; that stretch reads NNQSNNGKKEKLIKCKKEVQQLRQKLDQLTFQ.

This is an uncharacterized protein from Acheta domesticus (House cricket).